The chain runs to 647 residues: Acetyl-coenzyme A synthetase (647 aa).

CoA-binding positions include 189–192 (RGGK), threonine 307, and asparagine 331. ATP is bound by residues 383–385 (GEP), 407–412 (DTWWQT), aspartate 496, and arginine 511. Serine 519 is a CoA binding site. Arginine 522 contributes to the ATP binding site. Mg(2+) contacts are provided by histidine 535 and valine 538. Arginine 580 serves as a coordination point for CoA. Lysine 605 bears the N6-acetyllysine mark.

This sequence belongs to the ATP-dependent AMP-binding enzyme family. It depends on Mg(2+) as a cofactor. In terms of processing, acetylated. Deacetylation by the SIR2-homolog deacetylase activates the enzyme.

The enzyme catalyses acetate + ATP + CoA = acetyl-CoA + AMP + diphosphate. Its function is as follows. Catalyzes the conversion of acetate into acetyl-CoA (AcCoA), an essential intermediate at the junction of anabolic and catabolic pathways. AcsA undergoes a two-step reaction. In the first half reaction, AcsA combines acetate with ATP to form acetyl-adenylate (AcAMP) intermediate. In the second half reaction, it can then transfer the acetyl group from AcAMP to the sulfhydryl group of CoA, forming the product AcCoA. In Syntrophus aciditrophicus (strain SB), this protein is Acetyl-coenzyme A synthetase.